The chain runs to 598 residues: Aspartate--tRNA(Asp/Asn) ligase (598 aa).

Glutamate 170 is a binding site for L-aspartate. An aspartate region spans residues 194–197 (QLFK). Arginine 216 is a binding site for L-aspartate. ATP is bound by residues 216–218 (RDE) and glutamine 225. Histidine 448 lines the L-aspartate pocket. Position 482 (glutamate 482) interacts with ATP. Arginine 489 contributes to the L-aspartate binding site. Residue 534 to 537 (GWDR) participates in ATP binding. The tract at residues 558–598 (GGGVDPLTDAPAPITPQQRKESGIDAKPREDKPKEDAKSKA) is disordered. Residues 575 to 598 (QRKESGIDAKPREDKPKEDAKSKA) are compositionally biased toward basic and acidic residues.

It belongs to the class-II aminoacyl-tRNA synthetase family. Type 1 subfamily. As to quaternary structure, homodimer.

The protein localises to the cytoplasm. The catalysed reaction is tRNA(Asx) + L-aspartate + ATP = L-aspartyl-tRNA(Asx) + AMP + diphosphate. Functionally, aspartyl-tRNA synthetase with relaxed tRNA specificity since it is able to aspartylate not only its cognate tRNA(Asp) but also tRNA(Asn). Reaction proceeds in two steps: L-aspartate is first activated by ATP to form Asp-AMP and then transferred to the acceptor end of tRNA(Asp/Asn). This Mycolicibacterium smegmatis (strain ATCC 700084 / mc(2)155) (Mycobacterium smegmatis) protein is Aspartate--tRNA(Asp/Asn) ligase.